Reading from the N-terminus, the 305-residue chain is Putative E3 ubiquitin-protein ligase SINAT1 (305 aa).

The RING-type zinc finger occupies 57-93 (CPVCTNLMYPPIHQCPNGHTLCSSCKLRVQNTCPTCR). An SBD region spans residues 107–300 (VAESLEVPCR…EELKLRVTGR (194 aa)). The segment at 110–170 (SLEVPCRYQN…LVDHLKDDHK (61 aa)) adopts an SIAH-type zinc-finger fold. Zn(2+)-binding residues include Cys-115, Cys-122, His-134, Cys-138, Cys-145, Cys-152, His-164, and His-169.

The protein belongs to the SINA (Seven in absentia) family. In terms of assembly, interacts with SINAT6. Interacts with ATG6 and TRAF1A. Interacts with WAV3. Interacts with FREE1. Interacts with ELC/VPS23A.

The protein localises to the endosome. The protein resides in the multivesicular body. It is found in the cytoplasmic vesicle. Its subcellular location is the autophagosome. The enzyme catalyses S-ubiquitinyl-[E2 ubiquitin-conjugating enzyme]-L-cysteine + [acceptor protein]-L-lysine = [E2 ubiquitin-conjugating enzyme]-L-cysteine + N(6)-ubiquitinyl-[acceptor protein]-L-lysine.. It functions in the pathway protein modification; protein ubiquitination. In terms of biological role, E3 ubiquitin-protein ligase that mediates ubiquitination and subsequent proteasomal degradation of target proteins. E3 ubiquitin ligases accept ubiquitin from an E2 ubiquitin-conjugating enzyme in the form of a thioester and then directly transfers the ubiquitin to targeted substrates. It probably triggers the ubiquitin-mediated degradation of different substrates. Mediates the proteasomal-dependent degradation of ATG6, a component of the autophagosome complex. Requires TRAF1A/MUSE14 and TRAF1B/MUSE13 to target ATG6 for ubiquitination and subsequent regulation of autophagosome assembly. Modulates directly the ubiquitination and proteasomal-dependent degradation of FREE1, a component of the ESCRT-I complex. Modulates directly the ubiquitination and proteasomal-dependent degradation of ELC/VPS23A, a component of the ESCRT-I complex. This Arabidopsis thaliana (Mouse-ear cress) protein is Putative E3 ubiquitin-protein ligase SINAT1.